The chain runs to 218 residues: Ras-related protein RabO (218 aa).

Residue 15-22 coordinates GTP; it reads GDYCVGKT. Residues 37-45 carry the Effector region motif; it reads RNCNIGVDF. GTP contacts are provided by residues 63–67 and 122–125; these read DTGGQ and NKID. Cysteine methyl ester is present on Cys-215. Cys-215 carries the S-geranylgeranyl cysteine lipid modification. A propeptide spans 216–218 (removed in mature form); it reads FIL.

Belongs to the small GTPase superfamily. Rab family.

It localises to the cell membrane. The sequence is that of Ras-related protein RabO (rabO) from Dictyostelium discoideum (Social amoeba).